A 631-amino-acid polypeptide reads, in one-letter code: VPS9 domain-containing protein 1 (631 aa).

Ser116 carries the phosphoserine modification. Residues 187–221 are a coiled coil; it reads RQMMENLVIAKAREETLQRKMEERRLRLQEAANRR. The tract at residues 318 to 379 is disordered; sequence PNPGSRRLRP…ASGLPDKDSS (62 aa). A compositionally biased stretch (pro residues) spans 337 to 362; the sequence is PPEPSAAPRPQDSPPTPPLQPGPVGS. One can recognise a VPS9 domain in the interval 467-630; it reads RAREAALSRS…VELLPRGGLA (164 aa).

In terms of tissue distribution, ubiquitous.

This is VPS9 domain-containing protein 1 (VPS9D1) from Homo sapiens (Human).